The primary structure comprises 206 residues: Large ribosomal subunit protein mL62 (206 aa).

A mitochondrion-targeting transit peptide spans 1 to 29 (MATAWCLPWTLRRAGAWLLTPPLRCPRRA).

Belongs to the prokaryotic/mitochondrial release factor family. Mitochondrion-specific ribosomal protein mL62 subfamily. As to quaternary structure, component of the mitochondrial 39S ribosomal subunit.

The protein resides in the mitochondrion. It catalyses the reaction an N-acyl-L-alpha-aminoacyl-tRNA + H2O = an N-acyl-L-amino acid + a tRNA + H(+). In terms of biological role, essential peptidyl-tRNA hydrolase component of the mitochondrial large ribosomal subunit. Acts as a codon-independent translation release factor that has lost all stop codon specificity and directs the termination of translation in mitochondrion, possibly in case of abortive elongation. May be involved in the hydrolysis of peptidyl-tRNAs that have been prematurely terminated and thus in the recycling of stalled mitochondrial ribosomes. The polypeptide is Large ribosomal subunit protein mL62 (Ailuropoda melanoleuca (Giant panda)).